A 291-amino-acid polypeptide reads, in one-letter code: Mitochondrial thiamine pyrophosphate carrier 1 (291 aa).

A run of 6 helical transmembrane segments spans residues 12-31 (GATA…GAVA), 83-99 (IMYI…YSMF), 120-141 (SLIV…FDLL), 167-191 (GGLA…GLMF), 214-230 (FCGF…TFPL), and 265-282 (GFGI…VSLF). Solcar repeat units lie at residues 15 to 102 (ASVY…FSKA), 115 to 200 (RPSN…AREV), and 207 to 290 (NIPF…VLNG).

It belongs to the mitochondrial carrier (TC 2.A.29) family.

The protein resides in the mitochondrion inner membrane. In terms of biological role, mitochondrial transporter that mediates uptake of thiamine pyrophosphate (ThPP) into mitochondria. This is Mitochondrial thiamine pyrophosphate carrier 1 (TPC1) from Meyerozyma guilliermondii (strain ATCC 6260 / CBS 566 / DSM 6381 / JCM 1539 / NBRC 10279 / NRRL Y-324) (Yeast).